The primary structure comprises 420 residues: Phospholipase A1-II 3 (420 aa).

A signal peptide spans 1-21 (MCCFLLVSVLLATTLTDVASA). N-linked (GlcNAc...) asparagine glycosylation occurs at N231. S240 (acyl-ester intermediate) is an active-site residue. S240 functions as the Charge relay system in the catalytic mechanism. N294 carries an N-linked (GlcNAc...) asparagine glycan. Active-site charge relay system residues include D305 and H343. Residues 367-388 (VVDRDLALVNKEVDALRDEYQV) adopt a coiled-coil conformation. N403 is a glycosylation site (N-linked (GlcNAc...) asparagine).

Belongs to the AB hydrolase superfamily. Lipase family.

The protein localises to the secreted. Functionally, acylhydrolase that catalyzes the hydrolysis of phospholipids at the sn-1 position. This is Phospholipase A1-II 3 from Oryza sativa subsp. indica (Rice).